A 276-amino-acid polypeptide reads, in one-letter code: Dermonecrotic toxin LsaSicTox-alphaIB2i (276 aa).

Histidine 5 is a catalytic residue. The Mg(2+) site is built by glutamate 25 and aspartate 27. The active-site Nucleophile is the histidine 41. 2 disulfide bridges follow: cysteine 45-cysteine 51 and cysteine 47-cysteine 190. Aspartate 85 contacts Mg(2+). N-linked (GlcNAc...) asparagine glycosylation is found at asparagine 129 and asparagine 253.

Belongs to the arthropod phospholipase D family. Class II subfamily. Mg(2+) is required as a cofactor. Expressed by the venom gland.

It is found in the secreted. It catalyses the reaction an N-(acyl)-sphingosylphosphocholine = an N-(acyl)-sphingosyl-1,3-cyclic phosphate + choline. The catalysed reaction is an N-(acyl)-sphingosylphosphoethanolamine = an N-(acyl)-sphingosyl-1,3-cyclic phosphate + ethanolamine. The enzyme catalyses a 1-acyl-sn-glycero-3-phosphocholine = a 1-acyl-sn-glycero-2,3-cyclic phosphate + choline. It carries out the reaction a 1-acyl-sn-glycero-3-phosphoethanolamine = a 1-acyl-sn-glycero-2,3-cyclic phosphate + ethanolamine. Its function is as follows. Dermonecrotic toxins cleave the phosphodiester linkage between the phosphate and headgroup of certain phospholipids (sphingolipid and lysolipid substrates), forming an alcohol (often choline) and a cyclic phosphate. This toxin acts on sphingomyelin (SM). It may also act on ceramide phosphoethanolamine (CPE), lysophosphatidylcholine (LPC) and lysophosphatidylethanolamine (LPE), but not on lysophosphatidylserine (LPS), and lysophosphatidylglycerol (LPG). It acts by transphosphatidylation, releasing exclusively cyclic phosphate products as second products. Induces dermonecrosis, hemolysis, increased vascular permeability, edema, inflammatory response, and platelet aggregation. In Loxosceles sabina (Tucson recluse spider), this protein is Dermonecrotic toxin LsaSicTox-alphaIB2i.